Here is a 319-residue protein sequence, read N- to C-terminus: Aliphatic sulfonates import ATP-binding protein SsuB (319 aa).

Residues 63–282 (VTLSGVSKRF…ARASAAFAAL (220 aa)) form the ABC transporter domain. 95–102 (GRSGCGKS) lines the ATP pocket.

This sequence belongs to the ABC transporter superfamily. Aliphatic sulfonates importer (TC 3.A.1.17.2) family. The complex is composed of two ATP-binding proteins (SsuB), two transmembrane proteins (SsuC) and a solute-binding protein (SsuA).

It localises to the cell inner membrane. The catalysed reaction is ATP + H2O + aliphatic sulfonate-[sulfonate-binding protein]Side 1 = ADP + phosphate + aliphatic sulfonateSide 2 + [sulfonate-binding protein]Side 1.. In terms of biological role, part of the ABC transporter complex SsuABC involved in aliphatic sulfonates import. Responsible for energy coupling to the transport system. This Burkholderia ambifaria (strain ATCC BAA-244 / DSM 16087 / CCUG 44356 / LMG 19182 / AMMD) (Burkholderia cepacia (strain AMMD)) protein is Aliphatic sulfonates import ATP-binding protein SsuB.